The primary structure comprises 159 residues: 17 kDa surface antigen (159 aa).

An N-terminal signal peptide occupies residues 1-19 (MKLLSKIMIIALAASMLQA). C20 is lipidated: N-palmitoyl cysteine. C20 carries the S-diacylglycerol cysteine lipid modification.

This sequence belongs to the rickettsiale 17 kDa surface antigen family.

Its subcellular location is the cell outer membrane. The chain is 17 kDa surface antigen (omp) from Rickettsia prowazekii (strain Madrid E).